The following is a 111-amino-acid chain: uncharacterized protein (111 aa).

A run of 2 helical transmembrane segments spans residues 29–49 (LLNF…ATAV) and 52–72 (ACFA…YLLA).

The protein resides in the membrane. This is an uncharacterized protein from Saccharomyces cerevisiae (strain ATCC 204508 / S288c) (Baker's yeast).